The sequence spans 75 residues: Small ribosomal subunit protein bS18 (75 aa).

The protein belongs to the bacterial ribosomal protein bS18 family. In terms of assembly, part of the 30S ribosomal subunit. Forms a tight heterodimer with protein bS6.

Its function is as follows. Binds as a heterodimer with protein bS6 to the central domain of the 16S rRNA, where it helps stabilize the platform of the 30S subunit. This Paracoccus denitrificans (strain Pd 1222) protein is Small ribosomal subunit protein bS18.